Here is a 717-residue protein sequence, read N- to C-terminus: Radial spoke head protein 6 homolog A (717 aa).

Disordered stretches follow at residues 1–65, 503–523, 563–588, and 672–717; these read MGDL…SLSQ, SEEE…YEEN, TEEE…QEVG, and GPEI…ETDD. Composition is skewed to acidic residues over residues 503-513, 564-585, and 700-717; these read SEEEGDEEEEG, EEEE…EVEQ, and TEEE…ETDD.

Belongs to the flagellar radial spoke RSP4/6 family. Component of the axonemal radial spoke 1 (RS1) and 2 (RS2) complexes, at least composed of spoke head proteins RSPH1, RSPH3, RSPH9 and the cilia-specific component RSPH4A or sperm-specific component RSPH6A, spoke stalk proteins RSPH14, DNAJB13, DYDC1, ROPN1L and NME5, and the RS1 complex-specific anchor protein IQUB. Interacts with RSPH1. Interacts with RSPH3B. Interacts with RSPH4A. Interacts with RSPH9. Interacts with RSPH10B. In terms of processing, phosphorylated by PKA. Phosphorylation increases in capacitated sperm.

The protein resides in the cytoplasm. It localises to the cytoskeleton. It is found in the flagellum axoneme. In terms of biological role, functions as part of radial spoke complexes in the axoneme of sperm flagella that play an important part in motility. The triple radial spokes (RS1, RS2 and RS3) are required to modulate beating of the sperm flagellum. The sequence is that of Radial spoke head protein 6 homolog A from Homo sapiens (Human).